Here is a 128-residue protein sequence, read N- to C-terminus: Phosphoribosyl-AMP cyclohydrolase (128 aa).

Asp-89 provides a ligand contact to Mg(2+). Position 90 (Cys-90) interacts with Zn(2+). 2 residues coordinate Mg(2+): Asp-91 and Asp-93. 2 residues coordinate Zn(2+): Cys-106 and Cys-113.

It belongs to the PRA-CH family. In terms of assembly, homodimer. The cofactor is Mg(2+). It depends on Zn(2+) as a cofactor.

Its subcellular location is the cytoplasm. The catalysed reaction is 1-(5-phospho-beta-D-ribosyl)-5'-AMP + H2O = 1-(5-phospho-beta-D-ribosyl)-5-[(5-phospho-beta-D-ribosylamino)methylideneamino]imidazole-4-carboxamide. It functions in the pathway amino-acid biosynthesis; L-histidine biosynthesis; L-histidine from 5-phospho-alpha-D-ribose 1-diphosphate: step 3/9. Functionally, catalyzes the hydrolysis of the adenine ring of phosphoribosyl-AMP. The polypeptide is Phosphoribosyl-AMP cyclohydrolase (Pyrobaculum calidifontis (strain DSM 21063 / JCM 11548 / VA1)).